Here is a 171-residue protein sequence, read N- to C-terminus: Sec-independent protein translocase protein TatB (171 aa).

The helical transmembrane segment at 1–21 (MFDIGFSELLLVFIIGLVVLG) threads the bilayer. The disordered stretch occupies residues 117 to 171 (KDNETAHEGVTPAAAQTQASSPEQKPETTPEPVVKPAADAEPKTAAPSPSSSDKP). Residues 130–139 (AAQTQASSPE) show a composition bias toward polar residues.

This sequence belongs to the TatB family. In terms of assembly, the Tat system comprises two distinct complexes: a TatABC complex, containing multiple copies of TatA, TatB and TatC subunits, and a separate TatA complex, containing only TatA subunits. Substrates initially bind to the TatABC complex, which probably triggers association of the separate TatA complex to form the active translocon.

The protein localises to the cell inner membrane. In terms of biological role, part of the twin-arginine translocation (Tat) system that transports large folded proteins containing a characteristic twin-arginine motif in their signal peptide across membranes. Together with TatC, TatB is part of a receptor directly interacting with Tat signal peptides. TatB may form an oligomeric binding site that transiently accommodates folded Tat precursor proteins before their translocation. The protein is Sec-independent protein translocase protein TatB of Escherichia coli O6:K15:H31 (strain 536 / UPEC).